A 291-amino-acid chain; its full sequence is Undecaprenyl-diphosphatase (291 aa).

Helical transmembrane passes span M1–F21, S48–F68, L102–I122, L126–A146, I162–F182, S203–L223, I231–A251, and F267–I287.

Belongs to the UppP family.

Its subcellular location is the cell membrane. It carries out the reaction di-trans,octa-cis-undecaprenyl diphosphate + H2O = di-trans,octa-cis-undecaprenyl phosphate + phosphate + H(+). Functionally, catalyzes the dephosphorylation of undecaprenyl diphosphate (UPP). Confers resistance to bacitracin. This Staphylococcus aureus (strain MRSA252) protein is Undecaprenyl-diphosphatase.